The primary structure comprises 337 residues: N-acetyl-gamma-glutamyl-phosphate reductase (337 aa).

Residue Cys149 is part of the active site.

Belongs to the NAGSA dehydrogenase family. Type 1 subfamily.

Its subcellular location is the cytoplasm. The enzyme catalyses N-acetyl-L-glutamate 5-semialdehyde + phosphate + NADP(+) = N-acetyl-L-glutamyl 5-phosphate + NADPH + H(+). It participates in amino-acid biosynthesis; L-arginine biosynthesis; N(2)-acetyl-L-ornithine from L-glutamate: step 3/4. Its function is as follows. Catalyzes the NADPH-dependent reduction of N-acetyl-5-glutamyl phosphate to yield N-acetyl-L-glutamate 5-semialdehyde. The sequence is that of N-acetyl-gamma-glutamyl-phosphate reductase from Wolinella succinogenes (strain ATCC 29543 / DSM 1740 / CCUG 13145 / JCM 31913 / LMG 7466 / NCTC 11488 / FDC 602W) (Vibrio succinogenes).